Reading from the N-terminus, the 371-residue chain is Collectin-46 (371 aa).

An N-terminal signal peptide occupies residues 1–20; that stretch reads MLLLPLSVLLLLTQPWRSLG. Residues 43–215 form a disordered region; sequence PEGGLPGRDG…ERGAKGESGL (173 aa). Positions 46–216 constitute a Collagen-like domain; the sequence is GLPGRDGQDG…RGAKGESGLA (171 aa). Residues 51–65 show a composition bias toward basic and acidic residues; it reads DGQDGREGPQGEKGD. An N-linked (GlcNAc...) asparagine glycan is attached at N90. Positions 113-128 are enriched in low complexity; that stretch reads PAGREGPSGKQGSMGP. Residues 139-148 show a composition bias toward gly residues; the sequence is GPKGGMGAPG. The segment covering 170-191 has biased composition (low complexity); sequence APGSAGVAGPAGAIGPQGPSGA. The segment covering 198 to 210 has biased composition (basic and acidic residues); sequence KGDRGDPGERGAK. Positions 201–203 match the Cell attachment site motif; the sequence is RGD. In terms of domain architecture, C-type lectin spans 273–371; that stretch reads QLCREAKGQL…SEPLLVICEF (99 aa). 2 cysteine pairs are disulfide-bonded: C275-C369 and C347-C361.

This sequence belongs to the SFTPD family. As to quaternary structure, oligomeric complex of 4 set of homotrimers. In terms of processing, hydroxylated. Highly expressed in thymus and liver.

Its subcellular location is the secreted. The chain is Collectin-46 (CL46) from Bos taurus (Bovine).